Reading from the N-terminus, the 158-residue chain is SsrA-binding protein (158 aa).

Belongs to the SmpB family.

It is found in the cytoplasm. Functionally, required for rescue of stalled ribosomes mediated by trans-translation. Binds to transfer-messenger RNA (tmRNA), required for stable association of tmRNA with ribosomes. tmRNA and SmpB together mimic tRNA shape, replacing the anticodon stem-loop with SmpB. tmRNA is encoded by the ssrA gene; the 2 termini fold to resemble tRNA(Ala) and it encodes a 'tag peptide', a short internal open reading frame. During trans-translation Ala-aminoacylated tmRNA acts like a tRNA, entering the A-site of stalled ribosomes, displacing the stalled mRNA. The ribosome then switches to translate the ORF on the tmRNA; the nascent peptide is terminated with the 'tag peptide' encoded by the tmRNA and targeted for degradation. The ribosome is freed to recommence translation, which seems to be the essential function of trans-translation. In Caldicellulosiruptor bescii (strain ATCC BAA-1888 / DSM 6725 / KCTC 15123 / Z-1320) (Anaerocellum thermophilum), this protein is SsrA-binding protein.